The sequence spans 251 residues: Elongator complex protein 6 (251 aa).

It belongs to the ELP6 family. In terms of assembly, component of the elongator complex composed of Elp1, Elp2, Elp3, Elp4, Elp5 and Elp6. The elongator complex associates with and stabilizes microtubules; efficient interaction requires the full complex. Interacts with InR/Insulin-like receptor; the interaction may stabilize Elp6.

The protein localises to the cytoplasm. It localises to the nucleus. Its subcellular location is the cytoskeleton. The protein resides in the spindle. It participates in tRNA modification; 5-methoxycarbonylmethyl-2-thiouridine-tRNA biosynthesis. Functionally, component of the elongator complex, which is required for multiple tRNA modifications, including mcm5U (5-methoxycarbonylmethyl uridine), mcm5s2U (5-methoxycarbonylmethyl-2-thiouridine), and ncm5U (5-carbamoylmethyl uridine). The elongator complex catalyzes formation of carboxymethyluridine in the wobble base at position 34 in tRNAs. Binding by the elongator complex stabilizes microtubules and promotes their growth. This induces central spindle asymmetry, promoting polarized signaling endosome trafficking during asymmetric cell division and cell fate assignation of sensory organ precursor cells. Required in germ line cells for microtubule organization involved in oocyte polarization and chromosome organization. Involved in InR-TOR (insulin-like receptor-target of rapamycin) signaling regulation of cellular metabolism, autophagy and apoptosis. The sequence is that of Elongator complex protein 6 from Drosophila melanogaster (Fruit fly).